A 210-amino-acid chain; its full sequence is Dephospho-CoA kinase (210 aa).

The region spanning 4–202 (WVGLTGGIGS…AFYSGIFASK (199 aa)) is the DPCK domain. 12–17 (GSGKSA) contributes to the ATP binding site.

This sequence belongs to the CoaE family.

The protein localises to the cytoplasm. The catalysed reaction is 3'-dephospho-CoA + ATP = ADP + CoA + H(+). The protein operates within cofactor biosynthesis; coenzyme A biosynthesis; CoA from (R)-pantothenate: step 5/5. Functionally, catalyzes the phosphorylation of the 3'-hydroxyl group of dephosphocoenzyme A to form coenzyme A. The protein is Dephospho-CoA kinase of Neisseria gonorrhoeae.